The primary structure comprises 1038 residues: TonB-dependent receptor P39 (1038 aa).

The first 39 residues, methionine 1–alanine 39, serve as a signal peptide directing secretion. Residues aspartate 120 to tyrosine 127 carry the TonB box motif. The TBDR plug domain occupies lysine 131–lysine 243. One can recognise a TBDR beta-barrel domain in the interval phenylalanine 249–phenylalanine 1038. The TonB C-terminal box signature appears at serine 1021 to phenylalanine 1038.

The protein belongs to the TonB-dependent receptor family.

The protein resides in the cell outer membrane. In terms of biological role, tonB-dependent receptor probably involved in ulvan degradation. Ulvan is the main polysaccharide component of the Ulvales (green seaweed) cell wall. It is composed of disaccharide building blocks comprising 3-sulfated rhamnose (Rha3S) linked to D-glucuronic acid (GlcA), L-iduronic acid (IduA), or D-xylose (Xyl). The TonB-dependent receptor may mediate transport of ulvan oligosaccharides from the surface of the outer membrane to the periplasm for subsequent degradation. The sequence is that of TonB-dependent receptor P39 from Formosa agariphila (strain DSM 15362 / KCTC 12365 / LMG 23005 / KMM 3901 / M-2Alg 35-1).